The primary structure comprises 457 residues: Ribosomal protein uS12 methylthiotransferase RimO (457 aa).

The region spanning 30-140 (PTIGMVSLGC…VLDAVHGAVP (111 aa)) is the MTTase N-terminal domain. [4Fe-4S] cluster-binding residues include cysteine 39, cysteine 75, cysteine 104, cysteine 171, cysteine 175, and cysteine 178. A Radical SAM core domain is found at 157–386 (LTPRHFSYLK…MQKAQAISEA (230 aa)). Residues 389 to 456 (AARIGQRLEV…EYDLWGRAVL (68 aa)) enclose the TRAM domain.

Belongs to the methylthiotransferase family. RimO subfamily. It depends on [4Fe-4S] cluster as a cofactor.

Its subcellular location is the cytoplasm. It carries out the reaction L-aspartate(89)-[ribosomal protein uS12]-hydrogen + (sulfur carrier)-SH + AH2 + 2 S-adenosyl-L-methionine = 3-methylsulfanyl-L-aspartate(89)-[ribosomal protein uS12]-hydrogen + (sulfur carrier)-H + 5'-deoxyadenosine + L-methionine + A + S-adenosyl-L-homocysteine + 2 H(+). Functionally, catalyzes the methylthiolation of an aspartic acid residue of ribosomal protein uS12. The chain is Ribosomal protein uS12 methylthiotransferase RimO from Cereibacter sphaeroides (strain ATCC 17025 / ATH 2.4.3) (Rhodobacter sphaeroides).